A 319-amino-acid chain; its full sequence is MQKKDVCEYITKWVSVTISTLVTIGVLVFPLSSEAYPIFAQQNYESPREATGRIVCANCHLAKKPVEIEVPQAVLPDTVFEAVVKIPYDKQINQVLANGKPGGLNVGAVLILPEGFQLAPPERIPPELKEKIGNLYFQPYRPEKSNILVVGPVPGKTYSEMVFPILAPDPSVNKQAYFLKYPIYLGGNRGRGQIYPDGSKSNNTVYNSPVTGTITSITKNKKGASTVTIITTDNREVVELIPAGPTLLISEGDTVKADQPLTNNPNVGGFGQADAEIVLQDPLRIQGLLVFFASVVLAQIFLVLKKKQFEKVQLAEMNF.

Residues 1 to 35 form the signal peptide; the sequence is MQKKDVCEYITKWVSVTISTLVTIGVLVFPLSSEA. The heme site is built by Tyr-36, Cys-56, Cys-59, and His-60. The helical transmembrane segment at 285 to 305 threads the bilayer; sequence IQGLLVFFASVVLAQIFLVLK.

This sequence belongs to the cytochrome f family. As to quaternary structure, the 4 large subunits of the cytochrome b6-f complex are cytochrome b6, subunit IV (17 kDa polypeptide, petD), cytochrome f and the Rieske protein, while the 4 small subunits are PetG, PetL, PetM and PetN. The complex functions as a dimer. The cofactor is heme.

It localises to the plastid. The protein localises to the chloroplast thylakoid membrane. Functionally, component of the cytochrome b6-f complex, which mediates electron transfer between photosystem II (PSII) and photosystem I (PSI), cyclic electron flow around PSI, and state transitions. This Zygnema circumcarinatum (Green alga) protein is Cytochrome f.